We begin with the raw amino-acid sequence, 244 residues long: MKWSRGRGGLLAWLKRLIVRSVLVVIGAWLAGILLFSFLPVPFSAVMVDRQISAWLKGEFSYVAHSDWVSMEEIAPEMALAVMAAEDQKFPDHWGFDLDAIGQALKHNERNTQRIRGASTLSQQMVKNLFLWDGRSWVRKGLEAGITTGVELVWTKRRILTVYLNIAEFGPGIFGVEAAARRYFNKPASRLTASESALLAAVLPNPIRFRANAPSSYVIQRQQWILRQMRQMGGDAFLRANNLN.

The chain crosses the membrane as a helical span at residues 23–43 (LVVIGAWLAGILLFSFLPVPF).

This sequence belongs to the glycosyltransferase 51 family.

The protein resides in the cell inner membrane. The enzyme catalyses [GlcNAc-(1-&gt;4)-Mur2Ac(oyl-L-Ala-gamma-D-Glu-L-Lys-D-Ala-D-Ala)](n)-di-trans,octa-cis-undecaprenyl diphosphate + beta-D-GlcNAc-(1-&gt;4)-Mur2Ac(oyl-L-Ala-gamma-D-Glu-L-Lys-D-Ala-D-Ala)-di-trans,octa-cis-undecaprenyl diphosphate = [GlcNAc-(1-&gt;4)-Mur2Ac(oyl-L-Ala-gamma-D-Glu-L-Lys-D-Ala-D-Ala)](n+1)-di-trans,octa-cis-undecaprenyl diphosphate + di-trans,octa-cis-undecaprenyl diphosphate + H(+). It functions in the pathway cell wall biogenesis; peptidoglycan biosynthesis. Its function is as follows. Peptidoglycan polymerase that catalyzes glycan chain elongation from lipid-linked precursors. The sequence is that of Biosynthetic peptidoglycan transglycosylase from Pectobacterium carotovorum subsp. carotovorum (strain PC1).